The following is a 367-amino-acid chain: Putative ionic transporter y4hA (367 aa).

11 helical membrane-spanning segments follow: residues 12-32, 39-59, 74-94, 108-128, 143-163, 172-192, 221-241, 249-269, 291-311, 318-338, and 347-367; these read VPLW…MTLA, SVVL…ASVH, AILL…SLML, VFAA…VLGG, AALA…NFVT, AIQL…FLFV, LAAG…AMLL, VEAL…VVLL, VLGS…AISV, ALGL…VGTI, and VLQG…SAIP.

The protein belongs to the Ca(2+):cation antiporter (CaCA) (TC 2.A.19) family.

It is found in the cell membrane. Functionally, possible cation transporter. This is Putative ionic transporter y4hA from Sinorhizobium fredii (strain NBRC 101917 / NGR234).